Reading from the N-terminus, the 510-residue chain is Lysine--tRNA ligase (510 aa).

Positions 420 and 427 each coordinate Mg(2+).

It belongs to the class-II aminoacyl-tRNA synthetase family. Homodimer. Mg(2+) is required as a cofactor.

The protein localises to the cytoplasm. It carries out the reaction tRNA(Lys) + L-lysine + ATP = L-lysyl-tRNA(Lys) + AMP + diphosphate. The polypeptide is Lysine--tRNA ligase (Vibrio vulnificus (strain YJ016)).